Consider the following 492-residue polypeptide: uncharacterized protein (492 aa).

The N-terminal stretch at 1–22 (MIRPNMFALLMLVVLAITSVNA) is a signal peptide. N92, N97, N119, N146, N213, N267, and N458 each carry an N-linked (GlcNAc...) asparagine; by host glycan.

The protein resides in the secreted. This is an uncharacterized protein from Acanthamoeba polyphaga (Amoeba).